The sequence spans 478 residues: Probable glycine dehydrogenase (decarboxylating) subunit 2 (478 aa).

N6-(pyridoxal phosphate)lysine is present on lysine 264.

The protein belongs to the GcvP family. C-terminal subunit subfamily. As to quaternary structure, the glycine cleavage system is composed of four proteins: P, T, L and H. In this organism, the P 'protein' is a heterodimer of two subunits. The cofactor is pyridoxal 5'-phosphate.

The catalysed reaction is N(6)-[(R)-lipoyl]-L-lysyl-[glycine-cleavage complex H protein] + glycine + H(+) = N(6)-[(R)-S(8)-aminomethyldihydrolipoyl]-L-lysyl-[glycine-cleavage complex H protein] + CO2. In terms of biological role, the glycine cleavage system catalyzes the degradation of glycine. The P protein binds the alpha-amino group of glycine through its pyridoxal phosphate cofactor; CO(2) is released and the remaining methylamine moiety is then transferred to the lipoamide cofactor of the H protein. This is Probable glycine dehydrogenase (decarboxylating) subunit 2 from Endomicrobium trichonymphae.